The primary structure comprises 256 residues: Tryptophan synthase alpha chain (256 aa).

Residues glutamate 51 and aspartate 62 each act as proton acceptor in the active site.

Belongs to the TrpA family. In terms of assembly, tetramer of two alpha and two beta chains.

The catalysed reaction is (1S,2R)-1-C-(indol-3-yl)glycerol 3-phosphate + L-serine = D-glyceraldehyde 3-phosphate + L-tryptophan + H2O. The protein operates within amino-acid biosynthesis; L-tryptophan biosynthesis; L-tryptophan from chorismate: step 5/5. In terms of biological role, the alpha subunit is responsible for the aldol cleavage of indoleglycerol phosphate to indole and glyceraldehyde 3-phosphate. This Solidesulfovibrio magneticus (strain ATCC 700980 / DSM 13731 / RS-1) (Desulfovibrio magneticus) protein is Tryptophan synthase alpha chain.